Consider the following 304-residue polypeptide: Ribonuclease Z (304 aa).

Zn(2+) contacts are provided by H63, H65, D67, H68, H143, D213, and H271. D67 (proton acceptor) is an active-site residue.

The protein belongs to the RNase Z family. As to quaternary structure, homodimer. Zn(2+) serves as cofactor.

The enzyme catalyses Endonucleolytic cleavage of RNA, removing extra 3' nucleotides from tRNA precursor, generating 3' termini of tRNAs. A 3'-hydroxy group is left at the tRNA terminus and a 5'-phosphoryl group is left at the trailer molecule.. Functionally, zinc phosphodiesterase, which displays some tRNA 3'-processing endonuclease activity. Probably involved in tRNA maturation, by removing a 3'-trailer from precursor tRNA. This Bacteroides fragilis (strain YCH46) protein is Ribonuclease Z.